Here is a 72-residue protein sequence, read N- to C-terminus: Large ribosomal subunit protein bL31 (72 aa).

Residues cysteine 16, cysteine 18, cysteine 38, and cysteine 41 each coordinate Zn(2+).

The protein belongs to the bacterial ribosomal protein bL31 family. Type A subfamily. Part of the 50S ribosomal subunit. Requires Zn(2+) as cofactor.

Binds the 23S rRNA. This chain is Large ribosomal subunit protein bL31, found in Vibrio cholerae serotype O1 (strain ATCC 39541 / Classical Ogawa 395 / O395).